A 65-amino-acid chain; its full sequence is Large ribosomal subunit protein uL30 (65 aa).

Belongs to the universal ribosomal protein uL30 family. Part of the 50S ribosomal subunit.

The chain is Large ribosomal subunit protein uL30 from Methylobacillus flagellatus (strain ATCC 51484 / DSM 6875 / VKM B-1610 / KT).